Reading from the N-terminus, the 286-residue chain is Bifunctional protein FolD (286 aa).

NADP(+)-binding positions include 164 to 166 (GRS), Ser193, and Ile234.

It belongs to the tetrahydrofolate dehydrogenase/cyclohydrolase family. Homodimer.

The enzyme catalyses (6R)-5,10-methylene-5,6,7,8-tetrahydrofolate + NADP(+) = (6R)-5,10-methenyltetrahydrofolate + NADPH. The catalysed reaction is (6R)-5,10-methenyltetrahydrofolate + H2O = (6R)-10-formyltetrahydrofolate + H(+). The protein operates within one-carbon metabolism; tetrahydrofolate interconversion. Functionally, catalyzes the oxidation of 5,10-methylenetetrahydrofolate to 5,10-methenyltetrahydrofolate and then the hydrolysis of 5,10-methenyltetrahydrofolate to 10-formyltetrahydrofolate. This is Bifunctional protein FolD from Maridesulfovibrio salexigens (strain ATCC 14822 / DSM 2638 / NCIMB 8403 / VKM B-1763) (Desulfovibrio salexigens).